We begin with the raw amino-acid sequence, 874 residues long: Alanine--tRNA ligase (874 aa).

H562, H566, C664, and H668 together coordinate Zn(2+).

The protein belongs to the class-II aminoacyl-tRNA synthetase family. The cofactor is Zn(2+).

It localises to the cytoplasm. The catalysed reaction is tRNA(Ala) + L-alanine + ATP = L-alanyl-tRNA(Ala) + AMP + diphosphate. Catalyzes the attachment of alanine to tRNA(Ala) in a two-step reaction: alanine is first activated by ATP to form Ala-AMP and then transferred to the acceptor end of tRNA(Ala). Also edits incorrectly charged Ser-tRNA(Ala) and Gly-tRNA(Ala) via its editing domain. This is Alanine--tRNA ligase from Shewanella sp. (strain MR-7).